Here is a 390-residue protein sequence, read N- to C-terminus: GTPase Obg (390 aa).

The 159-residue stretch at 1 to 159 (MKFIDESLIR…RDLLLELMLL (159 aa)) folds into the Obg domain. Residues 160–333 (ADVGMLGLPN…LCRDIMDFII (174 aa)) enclose the OBG-type G domain. Residues 166–173 (GLPNAGKS), 191–195 (FTTLV), 213–216 (DIPG), 283–286 (NKID), and 314–316 (SAA) each bind GTP. Mg(2+) contacts are provided by S173 and T193.

This sequence belongs to the TRAFAC class OBG-HflX-like GTPase superfamily. OBG GTPase family. In terms of assembly, monomer. It depends on Mg(2+) as a cofactor.

Its subcellular location is the cytoplasm. In terms of biological role, an essential GTPase which binds GTP, GDP and possibly (p)ppGpp with moderate affinity, with high nucleotide exchange rates and a fairly low GTP hydrolysis rate. Plays a role in control of the cell cycle, stress response, ribosome biogenesis and in those bacteria that undergo differentiation, in morphogenesis control. This Haemophilus influenzae (strain 86-028NP) protein is GTPase Obg.